Consider the following 329-residue polypeptide: Delta-aminolevulinic acid dehydratase (329 aa).

Residues Cys-122, Cys-124, and Cys-132 each contribute to the Zn(2+) site. Lys-199 functions as the Schiff-base intermediate with substrate in the catalytic mechanism. Positions 209 and 221 each coordinate 5-aminolevulinate. Residue Lys-252 is the Schiff-base intermediate with substrate of the active site. Residues Ser-279 and Tyr-318 each contribute to the 5-aminolevulinate site.

Belongs to the ALAD family. As to quaternary structure, homooctamer. Zn(2+) is required as a cofactor.

The catalysed reaction is 2 5-aminolevulinate = porphobilinogen + 2 H2O + H(+). Its pathway is porphyrin-containing compound metabolism; protoporphyrin-IX biosynthesis; coproporphyrinogen-III from 5-aminolevulinate: step 1/4. Functionally, catalyzes an early step in the biosynthesis of tetrapyrroles. Binds two molecules of 5-aminolevulinate per subunit, each at a distinct site, and catalyzes their condensation to form porphobilinogen. This is Delta-aminolevulinic acid dehydratase (hem2) from Schizosaccharomyces pombe (strain 972 / ATCC 24843) (Fission yeast).